The sequence spans 444 residues: Protein kinase C and casein kinase substrate in neurons protein 1 (444 aa).

Phosphoserine occurs at positions 2 and 79. The 271-residue stretch at 13–283 folds into the F-BAR domain; it reads EETTDSFWEV…AIRGADAQED (271 aa). A coiled-coil region spans residues 26–275; it reads KRTVKRIDDG…HVYRELEQAI (250 aa). Disordered stretches follow at residues 175–194 and 309–386; these read MNSK…LQDK and LPHT…DDSK. The residue at position 184 (threonine 184) is a Phosphothreonine. Over residues 314 to 324 the composition is skewed to basic and acidic residues; it reads TKKEKQPKKAE. The span at 329 to 351 shows a compositional bias: polar residues; it reads TNATGAVESTSQAGDRGSVSSYD. Phosphoserine occurs at positions 346, 348, 349, 361, and 365. The 60-residue stretch at 385–444 folds into the SH3 domain; that stretch reads SKGVRVRALYDYDGQEQDELSFKAGDELTKLGEEDEQGWCRGRLDSGQLGLYPANYVEAI. A Phosphotyrosine modification is found at tyrosine 394. A phosphoserine mark is found at serine 405 and serine 430.

Belongs to the PACSIN family. As to quaternary structure, may form heterooligomers with other PACSINs. Interacts with MAPT. Interacts with TRPV4. Interacts (via SH3 domain) with SYNJ1 and WASL. Interacts with DNM2 and DNM3. Interacts with both COBL and DBNL. Identified in a complex composed of COBL, PACSIN1 and WASL. Interacts with EHD1 and EHD3. Homodimer. Interacts (via SH3 domain) with DNM1; the interaction is reduced by DNM1 phosphorylation. Phosphorylated by casein kinase 2 (CK2) and protein kinase C (PKC). As to expression, highly expressed in brain and, at much lower levels, in heart and pancreas.

The protein resides in the cytoplasm. It is found in the cell projection. Its subcellular location is the synapse. The protein localises to the synaptosome. It localises to the ruffle membrane. The protein resides in the membrane. It is found in the cytoplasmic vesicle membrane. Its subcellular location is the cytosol. The protein localises to the cell membrane. In terms of biological role, plays a role in the reorganization of the microtubule cytoskeleton via its interaction with MAPT; this decreases microtubule stability and inhibits MAPT-induced microtubule polymerization. Plays a role in cellular transport processes by recruiting DNM1, DNM2 and DNM3 to membranes. Plays a role in the reorganization of the actin cytoskeleton and in neuron morphogenesis via its interaction with COBL and WASL, and by recruiting COBL to the cell cortex. Plays a role in the regulation of neurite formation, neurite branching and the regulation of neurite length. Required for normal synaptic vesicle endocytosis; this process retrieves previously released neurotransmitters to accommodate multiple cycles of neurotransmission. Required for normal excitatory and inhibitory synaptic transmission. Binds to membranes via its F-BAR domain and mediates membrane tubulation. The polypeptide is Protein kinase C and casein kinase substrate in neurons protein 1 (PACSIN1) (Homo sapiens (Human)).